The chain runs to 280 residues: Protein scylla (280 aa).

Positions 39–96 are disordered; the sequence is LMSKKAKTTTGGSSNGSNATATSTTTSTSSSIKHKQPAGSSNNNVGQSQSKKTKPSGS. Composition is skewed to low complexity over residues 46–69 and 77–96; these read TTTGGSSNGSNATATSTTTSTSSS and GSSNNNVGQSQSKKTKPSGS.

It belongs to the DDIT4 family.

It is found in the cytoplasm. Its function is as follows. Inhibits cell growth by regulating the Tor pathway upstream of the Tsc1-Tsc2 complex and downstream of Akt1. Acts as a cell death activator during head development. The chain is Protein scylla (scyl) from Drosophila melanogaster (Fruit fly).